The chain runs to 262 residues: Ribosomal RNA small subunit methyltransferase A (262 aa).

Residues His16, Leu18, Gly43, Glu64, Asp89, and Asn109 each coordinate S-adenosyl-L-methionine.

It belongs to the class I-like SAM-binding methyltransferase superfamily. rRNA adenine N(6)-methyltransferase family. RsmA subfamily.

It is found in the cytoplasm. The catalysed reaction is adenosine(1518)/adenosine(1519) in 16S rRNA + 4 S-adenosyl-L-methionine = N(6)-dimethyladenosine(1518)/N(6)-dimethyladenosine(1519) in 16S rRNA + 4 S-adenosyl-L-homocysteine + 4 H(+). Its function is as follows. Specifically dimethylates two adjacent adenosines (A1518 and A1519) in the loop of a conserved hairpin near the 3'-end of 16S rRNA in the 30S particle. May play a critical role in biogenesis of 30S subunits. This chain is Ribosomal RNA small subunit methyltransferase A, found in Xanthomonas campestris pv. campestris (strain 8004).